A 463-amino-acid polypeptide reads, in one-letter code: L-seryl-tRNA(Sec) selenium transferase (463 aa).

K295 carries the post-translational modification N6-(pyridoxal phosphate)lysine.

It belongs to the SelA family. As to quaternary structure, homodecamer; pentamer of dimers. Binds only one seryl-tRNA(Sec) per dimer. Pyridoxal 5'-phosphate is required as a cofactor.

The protein localises to the cytoplasm. It catalyses the reaction L-seryl-tRNA(Sec) + selenophosphate + H(+) = L-selenocysteinyl-tRNA(Sec) + phosphate. The protein operates within aminoacyl-tRNA biosynthesis; selenocysteinyl-tRNA(Sec) biosynthesis; selenocysteinyl-tRNA(Sec) from L-seryl-tRNA(Sec) (bacterial route): step 1/1. Functionally, converts seryl-tRNA(Sec) to selenocysteinyl-tRNA(Sec) required for selenoprotein biosynthesis. This is L-seryl-tRNA(Sec) selenium transferase from Salmonella enteritidis PT4 (strain P125109).